A 432-amino-acid chain; its full sequence is Glutamate-1-semialdehyde 2,1-aminomutase (432 aa).

K267 bears the N6-(pyridoxal phosphate)lysine mark.

This sequence belongs to the class-III pyridoxal-phosphate-dependent aminotransferase family. HemL subfamily. In terms of assembly, homodimer. The cofactor is pyridoxal 5'-phosphate.

It localises to the cytoplasm. It carries out the reaction (S)-4-amino-5-oxopentanoate = 5-aminolevulinate. It functions in the pathway porphyrin-containing compound metabolism; protoporphyrin-IX biosynthesis; 5-aminolevulinate from L-glutamyl-tRNA(Glu): step 2/2. This Syntrophus aciditrophicus (strain SB) protein is Glutamate-1-semialdehyde 2,1-aminomutase.